Here is a 912-residue protein sequence, read N- to C-terminus: MLPRIANQRAIVDRRALADAVSAAFAEQGDRSRPAVVELLRGALDSGRAELARRLEARPSAGTECAHGQAFLVDQLVRVIHDHVVGKVYRASNRSTGERIAIIAVGGYGRGEMAPHSDVDIAFVTPIKPTSWCEQVIEAILYFLWDLGLKVGHSSRSLDEVVRMAKSDLTIRTALLEGRYVWGDRDLFDAASARFWNEVVNGTEKQFVAEKLQERNERHKRLGDSRYVVEPNVKEGKGGLRDLHTLYWIGKYIHKVRDASELVDVGLLTAEEYRAFRRAENFFWAVRCHLHAITRRAEDRLTFDLQREVAMRMNFADRPGKSAVERFMQYFFLQAKQVGSLTGVFLAQLDGQFARQKRSFFASLRSRRKKVGPFFIEGGKLGVPAEDTFQQDPVRLVELFAVAASEKVEIHPEAMRLARRDAGLIDAAVRKDQRANALFLDVLTSRNDPETVLRWMNEAGVFGRFVPDFGRVVAQMQFDMYHHYTVDEHTIRAIGLLASIEKGEAKADHPLASEVVGKVASRRVLYVATLLHDIAKGRRGDHSVLGAEVAMKLCPRLGLSAAETELVAWLVRWHLLMSATAFKRDLADYKTIADFVNTVQSQERLRLLLLLTIVDIRAVGPGVWNSWKRQLLGDLFVSAEEVLRLGHKQHGRAERIIAKKKAVGAILKERDNLIGTVGRQLGDAYWIAEPEDIIALNLQQMDQALGELLSVEAHWYPARGATLVTVLAADHPGLFYRIAGGIHLAGGNIIDARIHTARNGTAVDNFLVQDPLGRPLNEASQIERLKNAIADALANRVKLVPQLAARPLARPRADAFDVRPIVIFDNKASNRFTVIEVGARDRPALLNRLARALFEARLIVHSAHIATYGERAVDTFYVTDVLGEKVDSEARMKAVEKRLLEAAEDRKVKDAA.

Positions 1 to 369 are uridylyltransferase; sequence MLPRIANQRA…FFASLRSRRK (369 aa). A uridylyl-removing region spans residues 370 to 722; sequence KVGPFFIEGG…AHWYPARGAT (353 aa). Positions 486 to 608 constitute an HD domain; it reads VDEHTIRAIG…VQSQERLRLL (123 aa). ACT domains are found at residues 723–802 and 834–912; these read LVTV…LVPQ and VIEV…KDAA.

The protein belongs to the GlnD family. It depends on Mg(2+) as a cofactor.

The enzyme catalyses [protein-PII]-L-tyrosine + UTP = [protein-PII]-uridylyl-L-tyrosine + diphosphate. It carries out the reaction [protein-PII]-uridylyl-L-tyrosine + H2O = [protein-PII]-L-tyrosine + UMP + H(+). With respect to regulation, uridylyltransferase (UTase) activity is inhibited by glutamine, while glutamine activates uridylyl-removing (UR) activity. In terms of biological role, modifies, by uridylylation and deuridylylation, the PII regulatory proteins (GlnB and homologs), in response to the nitrogen status of the cell that GlnD senses through the glutamine level. Under low glutamine levels, catalyzes the conversion of the PII proteins and UTP to PII-UMP and PPi, while under higher glutamine levels, GlnD hydrolyzes PII-UMP to PII and UMP (deuridylylation). Thus, controls uridylylation state and activity of the PII proteins, and plays an important role in the regulation of nitrogen assimilation and metabolism. The sequence is that of Bifunctional uridylyltransferase/uridylyl-removing enzyme from Novosphingobium aromaticivorans (strain ATCC 700278 / DSM 12444 / CCUG 56034 / CIP 105152 / NBRC 16084 / F199).